The following is an 82-amino-acid chain: DNA gyrase inhibitor YacG (82 aa).

Residues cysteine 9, cysteine 12, cysteine 27, and cysteine 31 each contribute to the Zn(2+) site. Residues 44–82 (IGLPHEGDPGDAPVEYLDDRDLTQPSPERQNESFHRYSE) form a disordered region. A compositionally biased stretch (basic and acidic residues) spans 72–82 (RQNESFHRYSE).

It belongs to the DNA gyrase inhibitor YacG family. In terms of assembly, interacts with GyrB. Zn(2+) is required as a cofactor.

Inhibits all the catalytic activities of DNA gyrase by preventing its interaction with DNA. Acts by binding directly to the C-terminal domain of GyrB, which probably disrupts DNA binding by the gyrase. This is DNA gyrase inhibitor YacG from Rhodopirellula baltica (strain DSM 10527 / NCIMB 13988 / SH1).